Reading from the N-terminus, the 2568-residue chain is Highly reducing polyketide synthase resH (2568 aa).

One can recognise a Ketosynthase family 3 (KS3) domain in the interval 9-437 (PEPIAIVGMA…GANAHAILDA (429 aa)). Catalysis depends on for beta-ketoacyl synthase activity residues C184, H319, and H359. Residues 549 to 877 (FIFTGQGAQW…KLAGSLFLSG (329 aa)) form the Malonyl-CoA:ACP transacylase (MAT) domain. Residues 942–1081 (HDLLGSRLPG…TNDQLLWPDD (140 aa)) are N-terminal hotdog fold. Positions 942 to 1244 (HDLLGSRLPG…FSSLETASSD (303 aa)) constitute a PKS/mFAS DH domain. H974 acts as the Proton acceptor; for dehydratase activity in catalysis. The tract at residues 1091-1244 (NKDSYDRRWY…FSSLETASSD (154 aa)) is C-terminal hotdog fold. The active-site Proton donor; for dehydratase activity is D1156. Residues 1295–1595 (VTRLAIRSSA…SGADVVLDDY (301 aa)) are methyltransferase (CMet) domain. An Enoyl reductase (ER) domain is found at 1853–2154 (GRLDSFYFKE…QEDSVGLAVL (302 aa)). Residues 2177-2357 (ASYLLIGCLG…QATSIALGMI (181 aa)) form the Ketoreductase (KR) domain. The Carrier domain maps to 2485–2563 (AVKSAILGLI…GLADQVVSLA (79 aa)). An O-(pantetheine 4'-phosphoryl)serine modification is found at S2522.

It depends on pantetheine 4'-phosphate as a cofactor.

It participates in antifungal biosynthesis. Highly reducing polyketide synthase; part of the gene cluster that mediates the biosynthesis of the tetrahydropyranyl antifungal agent restricticin that acts as an inhibitor of CYP51 and blocks the ergosterol biosynthesis. The highly reducing polyketide synthase resH, the short chain dehydrogenase resG, the cyclase resF, the FAD-dependent monooxygenase resA and the enoylreductase resD are required to generate the first stable intermediate desmethylrestrictinol. ResH with resD biosynthesize the first polyketide chain intermediate that is reduced by resG, followed by epoxidation by resA before 6-endo cyclization via epoxide opening by resF leads to desmethylrestrictinol. The methyltransferase resE then catalyzes the C4 O-methylation of desmethylrestrictinol to produce restrictinol, and the nonribosomal peptide synthetase resC catalyzes the C3 esterification of restrictinol with glycine that leads to restricticin. This is Highly reducing polyketide synthase resH from Aspergillus sclerotiorum.